The chain runs to 244 residues: Proteasome subunit alpha type-5 (244 aa).

It belongs to the peptidase T1A family. As to quaternary structure, the 26S proteasome consists of a 20S proteasome core and two 19S regulatory subunits. The 20S proteasome core is composed of 28 subunits that are arranged in four stacked rings, resulting in a barrel-shaped structure. The two end rings are each formed by seven alpha subunits, and the two central rings are each formed by seven beta subunits. The catalytic chamber with the active sites is on the inside of the barrel.

The protein resides in the cytoplasm. Its subcellular location is the nucleus. The proteasome is a multicatalytic proteinase complex which is characterized by its ability to cleave peptides with Arg, Phe, Tyr, Leu, and Glu adjacent to the leaving group at neutral or slightly basic pH. The proteasome has an ATP-dependent proteolytic activity. In Drosophila melanogaster (Fruit fly), this protein is Proteasome subunit alpha type-5 (Prosalpha5).